We begin with the raw amino-acid sequence, 103 residues long: Conantokin-Br (103 aa).

The first 21 residues, 1–21 (MQLYTYLYLLVPLVTFHLILG), serve as a signal peptide directing secretion. A propeptide spanning residues 22–79 (TGTLDHGGALTERRSTDATALKPEPVLQKSAARSTDDNGKDRLTQMKRILKKRGKNAR) is cleaved from the precursor. A disordered region spans residues 34–64 (RRSTDATALKPEPVLQKSAARSTDDNGKDRL). Basic and acidic residues predominate over residues 55–64 (STDDNGKDRL). A 4-carboxyglutamate mark is found at Glu-82, Glu-83, Glu-89, and Glu-93. Residues Glu-89 and Glu-93 each coordinate a divalent metal cation.

Belongs to the conotoxin B superfamily. Requires Ca(2+) as cofactor. Mg(2+) serves as cofactor. Expressed by the venom duct.

It localises to the secreted. Functionally, conantokins inhibit N-methyl-D-aspartate (NMDA) receptors. This toxin inhibits NR2 subunits N-methyl-D-aspartate (NMDA) receptor-mediated calcium influx in central nervous system neurons in the following order of preference: NR2B/GRIN2B (IC(50)=0.14 uM), NR2D/GRIN2D (IC(50)=0.31 uM), NR2A/GRIN2A (IC(50)=0.68 uM) and NR2C/GRIN2A (IC(50)=4.9 uM), when tested on rat receptors. In Conus sulcatus (Sulcate cone), this protein is Conantokin-Br.